The primary structure comprises 968 residues: RNA polymerase-associated protein RapA (968 aa).

Positions 164–334 (DVGRRHAPRV…FARLRLLDPN (171 aa)) constitute a Helicase ATP-binding domain. 177–184 (DEVGLGKT) is an ATP binding site. The DEAH box motif lies at 280-283 (DEAH). One can recognise a Helicase C-terminal domain in the interval 490 to 662 (RVEWLMGYLT…YLASPVQTEG (173 aa)).

This sequence belongs to the SNF2/RAD54 helicase family. RapA subfamily. As to quaternary structure, interacts with the RNAP. Has a higher affinity for the core RNAP than for the holoenzyme. Its ATPase activity is stimulated by binding to RNAP.

Transcription regulator that activates transcription by stimulating RNA polymerase (RNAP) recycling in case of stress conditions such as supercoiled DNA or high salt concentrations. Probably acts by releasing the RNAP, when it is trapped or immobilized on tightly supercoiled DNA. Does not activate transcription on linear DNA. Probably not involved in DNA repair. The protein is RNA polymerase-associated protein RapA of Shigella sonnei (strain Ss046).